The chain runs to 297 residues: tRNA-cytidine(32) 2-sulfurtransferase (297 aa).

Positions 45–50 match the PP-loop motif motif; it reads SGGKDS. [4Fe-4S] cluster-binding residues include Cys120, Cys123, and Cys211.

The protein belongs to the TtcA family. As to quaternary structure, homodimer. Mg(2+) serves as cofactor. [4Fe-4S] cluster is required as a cofactor.

It localises to the cytoplasm. It catalyses the reaction cytidine(32) in tRNA + S-sulfanyl-L-cysteinyl-[cysteine desulfurase] + AH2 + ATP = 2-thiocytidine(32) in tRNA + L-cysteinyl-[cysteine desulfurase] + A + AMP + diphosphate + H(+). It participates in tRNA modification. Its function is as follows. Catalyzes the ATP-dependent 2-thiolation of cytidine in position 32 of tRNA, to form 2-thiocytidine (s(2)C32). The sulfur atoms are provided by the cysteine/cysteine desulfurase (IscS) system. The protein is tRNA-cytidine(32) 2-sulfurtransferase of Vibrio campbellii (strain ATCC BAA-1116).